Here is a 333-residue protein sequence, read N- to C-terminus: Plasminogen (333 aa).

Residues 4–83 form the Kringle 5 domain; the sequence is CMFGNGKGYR…LFDYCDVPQC (80 aa). Disulfide bonds link cysteine 4–cysteine 83, cysteine 25–cysteine 66, cysteine 54–cysteine 78, cysteine 90–cysteine 208, cysteine 100–cysteine 108, cysteine 130–cysteine 146, cysteine 222–cysteine 289, cysteine 252–cysteine 268, and cysteine 279–cysteine 307. One can recognise a Peptidase S1 domain in the interval 104–331; the sequence is VVGGCVANPH…FVTWIEGIMR (228 aa). Serine 120 is subject to Phosphoserine. Residues histidine 145 and aspartate 188 each act as charge relay system in the active site. Catalysis depends on serine 283, which acts as the Charge relay system.

Belongs to the peptidase S1 family. Plasminogen subfamily. Interacts with CSPG4 and AMOT. Interacts (via the Kringle domains) with HRG; the interaction tethers PLG to the cell surface and enhances its activation. Interacts (via Kringle 4 domain) with ADA; the interaction stimulates PLG activation when in complex with DPP4. Angiostatin: Interacts with ATP5F1A; the interaction inhibits most of the angiogenic effects of angiostatin.

The protein localises to the secreted. It catalyses the reaction Preferential cleavage: Lys-|-Xaa &gt; Arg-|-Xaa, higher selectivity than trypsin. Converts fibrin into soluble products.. Its activity is regulated as follows. Converted into plasmin by plasminogen activators, both plasminogen and its activator being bound to fibrin. Activated with urokinase and high concentrations of streptokinase. Plasmin dissolves the fibrin of blood clots and acts as a proteolytic factor in a variety of other processes including embryonic development, tissue remodeling, tumor invasion, and inflammation. In ovulation, weakens the walls of the Graafian follicle. It activates the urokinase-type plasminogen activator, collagenases and several complement zymogens, such as C1, C4 and C5. Cleavage of fibronectin and laminin leads to cell detachment and apoptosis. Also cleaves fibrin, thrombospondin and von Willebrand factor. Its role in tissue remodeling and tumor invasion may be modulated by CSPG4. Binds to cells. The sequence is that of Plasminogen (PLG) from Canis lupus familiaris (Dog).